An 843-amino-acid chain; its full sequence is MVKFTADELRAIMDCKHNIRNMSVIAHVDHGKSTLTDSLVAAAGIIAQEVAGDVRMTDTRADEAERGITIKSTGISLYYQMTDEALQSYKGERKGNDYLINLIDSPGHVDFSSEVTAALRITDGALVVVDCIEGVCVQTETVLRQALGERIRPVLTVNKMDRCFLELQVDGEEAYTTFQKVIENANVIMATYEDPLLGDVQVYPEKGTVAFSAGLHGWAFTLSNFAKMYASKFGVDESKMMERLWGENFFDPATKKWTTKNSGNASCKRGFVQFCYEPIKQIIAACMNDQKDKLLAHVTKLGIQMKTEEKDLMGRPLMKRVMQTWLPASSALLEMMIHHLPSPATAQRYRVENLYEGPMDDVYATAIRNCDPEGPLMLYVSKMIPASDKGRFFAFGRVFAGKVSTGMKVRIMGPNYVPGEKKDLYVKNVQRTVIWMGKKQETVEDVPCGNTVALVGLDQYITKNATLTNEKESDAHPIRAMKFSVSPVVRVAVQCKVASDLPKLVEGLKRLAKSDPMVVCSIEESGEHIIAGAGELHLEICLKDLQDDFMGGAEIIKSDPVVSFRETVLDRSVRTVMSKSPNKHNRLYMEARPMEEGLAEAIDEGRIGPRDDPKNRSKILAEEYGWDKDLAKKIWCFGPETTGPNMVVDMCKGVQYLNEIKDSVVAGFQWASKEGALAEENMRGICFEVCDVVLHTDAIHRGGGQIIPTARRVFYASQLTAKPRLLEPVYLVEIQAPENALGGIYSVLNQKRGHVFEEMQRPGTPLYNIKAYLPVVESFGFSSTLRASTSGQAFPQCVFDHWEMMPSDPLEAGSQASTLVSVIRKRKGLKEQMTPLSEFEDKL.

The region spanning 17-253 (HNIRNMSVIA…LWGENFFDPA (237 aa)) is the tr-type G domain. 26 to 33 (AHVDHGKS) contributes to the GTP binding site. Threonine 57 and threonine 59 each carry phosphothreonine. 158 to 161 (NKMD) is a binding site for GTP. Histidine 700 carries the diphthamide modification.

The protein belongs to the TRAFAC class translation factor GTPase superfamily. Classic translation factor GTPase family. EF-G/EF-2 subfamily. Phosphorylation by EF-2 kinase completely inactivates EF-2.

It is found in the cytoplasm. The enzyme catalyses GTP + H2O = GDP + phosphate + H(+). In terms of biological role, catalyzes the GTP-dependent ribosomal translocation step during translation elongation. During this step, the ribosome changes from the pre-translocational (PRE) to the post-translocational (POST) state as the newly formed A-site-bound peptidyl-tRNA and P-site-bound deacylated tRNA move to the P and E sites, respectively. Catalyzes the coordinated movement of the two tRNA molecules, the mRNA and conformational changes in the ribosome. This is Elongation factor 2 from Beta vulgaris (Sugar beet).